Consider the following 809-residue polypeptide: TLR4 interactor with leucine rich repeats (809 aa).

Positions 1 to 25 (MEGVGAVRFWLVVCGCLAFPPRAES) are cleaved as a signal peptide. The LRRNT domain maps to 26–57 (VCPERCDCQHPQHLLCTNRGLRAVPKTSSLPS). Residues 26-694 (VCPERCDCQH…AGGRGGVDYQ (669 aa)) lie on the Extracellular side of the membrane. LRR repeat units lie at residues 61 to 81 (VLTYSLGGNFITNITAFDFHR), 84 to 105 (QLRRLDLQYNQIRSLHPKTFEK), 108 to 129 (RLEELYLGNNLLQALVPGTLAP), 132 to 153 (KLRILYANGNEIGRLSRGSFEG), 156 to 177 (SLVKLRLDGNVLGALPDAVFAP), 180 to 201 (NLLYLHLESNRIRFLGKNAFSQ), 204 to 223 (KLRFLNLSANELQPSLRHAA), 230 to 251 (SLSTLILSANSLQHLGPRVFQH), 254 to 275 (RLGLLSLSGNQLTHLAPEAFWG), 278 to 298 (ALRELRLEGNRLNQLPLTLLE), 302 to 323 (SLEALDLSGNELSALHPATFGH), and 326 to 347 (RLRELSLRDNALSALSGDIFAA). The N-linked (GlcNAc...) asparagine glycan is linked to Asn-73. Residues 359-416 (NGWTCDCRLRGLKRWMGNWHSQGRLLTVFVQCRHPPALRGKYLDYLDDQLLQNGSCVD) enclose the LRRCT domain. N-linked (GlcNAc...) asparagine glycosylation is present at Asn-411. 2 disordered regions span residues 412–462 (GSCV…RGRL) and 483–563 (RLSR…SAVQ). Positions 421–436 (PTAGSRQWPLPTSSEE) are enriched in polar residues. Low complexity predominate over residues 488 to 506 (GPGPHQGPSAAAPGSAPQS). The span at 521–543 (ANLSQTEPTPTSEPASGTPSARD) shows a compositional bias: polar residues. Over residues 554 to 563 (ASEQQESAVQ) the composition is skewed to low complexity. Asn-587 carries an N-linked (GlcNAc...) asparagine glycan. Residues 695–715 (LLTLVLLAVNALLVLLALAAW) form a helical membrane-spanning segment. Residues 716–809 (GSRWLRRKLR…EDHLLQRFAD (94 aa)) are Cytoplasmic-facing. Position 796 is a phosphoserine (Ser-796).

Belongs to the lipopolysaccharide (LPS) receptor, a multi-protein complex containing at least CD14, MD-2 and TLR4. Interacts with TLR4; this interaction is greatly enhanced by LPS stimulation. Interacts with LPS. In terms of processing, N-glycolysaled. Highly expressed in brain, spinal cord and lung.

Its subcellular location is the membrane. In terms of biological role, component of the TLR4 signaling complex. Mediates the innate immune response to bacterial lipopolysaccharide (LPS) leading to cytokine secretion. This Mus musculus (Mouse) protein is TLR4 interactor with leucine rich repeats (Tril).